The chain runs to 482 residues: tRNA sulfurtransferase (482 aa).

Residues 61 to 165 (AEVLEILTHT…GDKLNQVLAR (105 aa)) form the THUMP domain. ATP contacts are provided by residues 183 to 184 (LI), lysine 265, glycine 287, and glutamine 296. Residues cysteine 344 and cysteine 456 are joined by a disulfide bond. One can recognise a Rhodanese domain in the interval 404–482 (VEEHAVVLDI…GFNNVKVYRP (79 aa)). Cysteine 456 acts as the Cysteine persulfide intermediate in catalysis.

Belongs to the ThiI family.

The protein resides in the cytoplasm. It catalyses the reaction [ThiI sulfur-carrier protein]-S-sulfanyl-L-cysteine + a uridine in tRNA + 2 reduced [2Fe-2S]-[ferredoxin] + ATP + H(+) = [ThiI sulfur-carrier protein]-L-cysteine + a 4-thiouridine in tRNA + 2 oxidized [2Fe-2S]-[ferredoxin] + AMP + diphosphate. The enzyme catalyses [ThiS sulfur-carrier protein]-C-terminal Gly-Gly-AMP + S-sulfanyl-L-cysteinyl-[cysteine desulfurase] + AH2 = [ThiS sulfur-carrier protein]-C-terminal-Gly-aminoethanethioate + L-cysteinyl-[cysteine desulfurase] + A + AMP + 2 H(+). It participates in cofactor biosynthesis; thiamine diphosphate biosynthesis. Catalyzes the ATP-dependent transfer of a sulfur to tRNA to produce 4-thiouridine in position 8 of tRNAs, which functions as a near-UV photosensor. Also catalyzes the transfer of sulfur to the sulfur carrier protein ThiS, forming ThiS-thiocarboxylate. This is a step in the synthesis of thiazole, in the thiamine biosynthesis pathway. The sulfur is donated as persulfide by IscS. This chain is tRNA sulfurtransferase, found in Vibrio parahaemolyticus serotype O3:K6 (strain RIMD 2210633).